The primary structure comprises 278 residues: 4-deoxy-L-threo-5-hexosulose-uronate ketol-isomerase (278 aa).

Residues His196, His198, Glu203, and His245 each coordinate Zn(2+).

Belongs to the KduI family. Zn(2+) serves as cofactor.

The enzyme catalyses 5-dehydro-4-deoxy-D-glucuronate = 3-deoxy-D-glycero-2,5-hexodiulosonate. The protein operates within glycan metabolism; pectin degradation; 2-dehydro-3-deoxy-D-gluconate from pectin: step 4/5. In terms of biological role, catalyzes the isomerization of 5-dehydro-4-deoxy-D-glucuronate to 3-deoxy-D-glycero-2,5-hexodiulosonate. This chain is 4-deoxy-L-threo-5-hexosulose-uronate ketol-isomerase, found in Yersinia pestis bv. Antiqua (strain Antiqua).